The sequence spans 237 residues: Uridylate kinase (237 aa).

12–15 is a binding site for ATP; sequence KLSG. The involved in allosteric activation by GTP stretch occupies residues 20-25; that stretch reads GENGFG. Gly54 provides a ligand contact to UMP. Residues Gly55 and Arg59 each coordinate ATP. UMP-binding positions include Asp72 and 133–140; that span reads TGNPYFST. Positions 166 and 169 each coordinate ATP.

This sequence belongs to the UMP kinase family. In terms of assembly, homohexamer.

The protein localises to the cytoplasm. The enzyme catalyses UMP + ATP = UDP + ADP. Its pathway is pyrimidine metabolism; CTP biosynthesis via de novo pathway; UDP from UMP (UMPK route): step 1/1. Allosterically activated by GTP. Inhibited by UTP. Functionally, catalyzes the reversible phosphorylation of UMP to UDP. The protein is Uridylate kinase of Clostridium perfringens (strain SM101 / Type A).